The chain runs to 564 residues: Dihydroxy-acid dehydratase (564 aa).

C53 contributes to the [2Fe-2S] cluster binding site. D85 lines the Mg(2+) pocket. C126 serves as a coordination point for [2Fe-2S] cluster. Residues D127 and K128 each contribute to the Mg(2+) site. K128 is modified (N6-carboxylysine). C203 is a binding site for [2Fe-2S] cluster. E454 provides a ligand contact to Mg(2+). S480 acts as the Proton acceptor in catalysis.

This sequence belongs to the IlvD/Edd family. In terms of assembly, homodimer. It depends on [2Fe-2S] cluster as a cofactor. Requires Mg(2+) as cofactor.

It catalyses the reaction (2R)-2,3-dihydroxy-3-methylbutanoate = 3-methyl-2-oxobutanoate + H2O. It carries out the reaction (2R,3R)-2,3-dihydroxy-3-methylpentanoate = (S)-3-methyl-2-oxopentanoate + H2O. The protein operates within amino-acid biosynthesis; L-isoleucine biosynthesis; L-isoleucine from 2-oxobutanoate: step 3/4. It participates in amino-acid biosynthesis; L-valine biosynthesis; L-valine from pyruvate: step 3/4. Its function is as follows. Functions in the biosynthesis of branched-chain amino acids. Catalyzes the dehydration of (2R,3R)-2,3-dihydroxy-3-methylpentanoate (2,3-dihydroxy-3-methylvalerate) into 2-oxo-3-methylpentanoate (2-oxo-3-methylvalerate) and of (2R)-2,3-dihydroxy-3-methylbutanoate (2,3-dihydroxyisovalerate) into 2-oxo-3-methylbutanoate (2-oxoisovalerate), the penultimate precursor to L-isoleucine and L-valine, respectively. The sequence is that of Dihydroxy-acid dehydratase from Clavibacter michiganensis subsp. michiganensis (strain NCPPB 382).